The following is a 238-amino-acid chain: Oxidoreductase dmxR7 (238 aa).

It belongs to the avfA family.

Its pathway is secondary metabolite biosynthesis. Functionally, oxidoreductase; part of the gene cluster that mediates the biosynthesis of the dimeric xanthones cryptosporioptides. The pathway begins with the synthesis of atrochrysone thioester by the polyketide synthase dmx-nrPKS. The atrochrysone carboxyl ACP thioesterase dmxR1 then breaks the thioester bond and releases the atrochrysone carboxylic acid from dmx-nrPKS. Atrochrysone carboxylic acid is decarboxylated by the decarboxylase dmxR15, and oxidized by the anthrone oxygenase dmxR16 to yield emodin. Emodin is then reduced to emodin hydroquinone by the oxidoreductase dmxR7. A-ring reduction by the short chain dehydrogenase dmxR18, dehydration by the scytalone dehydratase-like protein dmxR17 and probable spontaneous re-oxidation, results in overall deoxygenation to chrysophanol. Baeyer-Villiger oxidation by the Baeyer-Villiger monooxygenase (BVMO) dmxR6 then yields monodictylactone in equilibrium with monodictyphenone. In the case of the cryptosporioptides biosynthesis, monodictylactone is reduced at C-12 to an alcohol (by the short chain dehydrogenases dmxR12 or dmxR8) and hydroxylated at C-5 by dmxR9, yielding the electron-rich aromatic which could eliminate H(2)O to form the ortho-quinonemethide, followed by tautomerisation to paraquinone and complete the formal reduction to produce the 10-methylgroup. Conjugate addition of C-4a-OH to the resulting paraquinone by the monooxygenase dmxR10 then gives cyclohexadienone, which is then reduced at C-5 by the short chain dehydrogenase dmxR3 to give the dihydroxanthone. The 6,7-epoxide in the cryptosporioptides could be introduced by the cytochrome P450 monooxygenase dmxL3. The highly reducing PKS dmxL2 manufactures butyrate, which is further carboxylated by dmxL1 to form ethylmalonate. It is not yet clear whether the carboxylation occurs while the butyrate is attached to the ACP of dmxL2, but this unusual fungal metabolite could then be esterified to O-5 by the O-acetyltransferase dmxR13. Finally, dimerization performed by dmxR5 gives the observed dimers cryptosporioptides A, B and C as the final products of the pathway. The polypeptide is Oxidoreductase dmxR7 (Cryptosporiopsis sp. (strain 8999)).